The following is a 294-amino-acid chain: Thymidylate synthase 1/2 (294 aa).

Residues Arg29 and 154–155 (RR) contribute to the dUMP site. Cys174 functions as the Nucleophile in the catalytic mechanism. DUMP is bound by residues 194–197 (RSGD), Asn205, and 235–237 (HVY). (6R)-5,10-methylene-5,6,7,8-tetrahydrofolate is bound at residue Asp197.

This sequence belongs to the thymidylate synthase family.

The enzyme catalyses dUMP + (6R)-5,10-methylene-5,6,7,8-tetrahydrofolate = 7,8-dihydrofolate + dTMP. It participates in pyrimidine metabolism; dTTP biosynthesis. The polypeptide is Thymidylate synthase 1/2 (TS-1) (Encephalitozoon cuniculi (strain GB-M1) (Microsporidian parasite)).